The sequence spans 81 residues: Small ribosomal subunit protein bS18 (81 aa).

The protein belongs to the bacterial ribosomal protein bS18 family. In terms of assembly, part of the 30S ribosomal subunit. Forms a tight heterodimer with protein bS6.

Functionally, binds as a heterodimer with protein bS6 to the central domain of the 16S rRNA, where it helps stabilize the platform of the 30S subunit. This chain is Small ribosomal subunit protein bS18, found in Rubrobacter xylanophilus (strain DSM 9941 / JCM 11954 / NBRC 16129 / PRD-1).